Here is a 537-residue protein sequence, read N- to C-terminus: CTP synthase (537 aa).

An amidoligase domain region spans residues 1–265 (MTKYIFVTGG…GKYLTKRLKL (265 aa)). Residue S13 participates in CTP binding. S13 serves as a coordination point for UTP. Residue 14–19 (GLGKGI) participates in ATP binding. Y54 contributes to the L-glutamine binding site. Position 71 (D71) interacts with ATP. Positions 71 and 139 each coordinate Mg(2+). CTP is bound by residues 146-148 (DIE), 186-191 (KTKPTQ), and K222. Residues 186–191 (KTKPTQ) and K222 each bind UTP. The Glutamine amidotransferase type-1 domain occupies 290-532 (EIAIVGKYVK…VRAAKEYKQE (243 aa)). G351 contributes to the L-glutamine binding site. The active-site Nucleophile; for glutamine hydrolysis is C378. L-glutamine contacts are provided by residues 379 to 382 (FGFQ), E402, and R459. Active-site residues include H505 and E507.

Belongs to the CTP synthase family. As to quaternary structure, homotetramer.

The enzyme catalyses UTP + L-glutamine + ATP + H2O = CTP + L-glutamate + ADP + phosphate + 2 H(+). It carries out the reaction L-glutamine + H2O = L-glutamate + NH4(+). The catalysed reaction is UTP + NH4(+) + ATP = CTP + ADP + phosphate + 2 H(+). The protein operates within pyrimidine metabolism; CTP biosynthesis via de novo pathway; CTP from UDP: step 2/2. Allosterically activated by GTP, when glutamine is the substrate; GTP has no effect on the reaction when ammonia is the substrate. The allosteric effector GTP functions by stabilizing the protein conformation that binds the tetrahedral intermediate(s) formed during glutamine hydrolysis. Inhibited by the product CTP, via allosteric rather than competitive inhibition. In terms of biological role, catalyzes the ATP-dependent amination of UTP to CTP with either L-glutamine or ammonia as the source of nitrogen. Regulates intracellular CTP levels through interactions with the four ribonucleotide triphosphates. This chain is CTP synthase, found in Pyrococcus furiosus (strain ATCC 43587 / DSM 3638 / JCM 8422 / Vc1).